A 140-amino-acid polypeptide reads, in one-letter code: Cytochrome c-type biogenesis protein CcmE (140 aa).

The Cytoplasmic portion of the chain corresponds to 1-7; that stretch reads MTKRQNR. Residues 8–28 traverse the membrane as a helical; Signal-anchor for type II membrane protein segment; it reads MVLVALLVIGVSLAGYLGLKA. Residues 29–140 are Periplasmic-facing; the sequence is FNENLLYFLS…DALEKAKNKQ (112 aa). Positions 120 and 124 each coordinate heme.

This sequence belongs to the CcmE/CycJ family.

It is found in the cell inner membrane. Heme chaperone required for the biogenesis of c-type cytochromes. Transiently binds heme delivered by CcmC and transfers the heme to apo-cytochromes in a process facilitated by CcmF and CcmH. This is Cytochrome c-type biogenesis protein CcmE from Vesicomyosocius okutanii subsp. Calyptogena okutanii (strain HA).